The following is a 151-amino-acid chain: MIVNNAHILTLPIPYHAPSVILTITCILIRHTHTDATIVYTISTYPTFTFHSMAHLSLHEYKCTHIIMHGTCLSGLYPVPFTHNSHYYPHFNIYILFRGPKYCINALNTYVIPLFHRILTTQFIYTYANITKKSPLKSPKHKNILSFNNNT.

The protein belongs to the UPF0320 family.

This Saccharomyces cerevisiae (strain ATCC 204508 / S288c) (Baker's yeast) protein is Putative UPF0320 protein YFL063W.